The following is a 620-amino-acid chain: Bicaudal D-related protein homolog (620 aa).

Over residues 23–41 the composition is skewed to low complexity; the sequence is NNNNNSIVGGSSSSSSGGN. A disordered region spans residues 23-53; sequence NNNNNSIVGGSSSSSSGGNKSKRPRQFGQYS. Coiled-coil stretches lie at residues 120–331 and 461–575; these read AAEL…LSER and VLEQ…LIDE. Basic and acidic residues-rich tracts occupy residues 493 to 503 and 509 to 528; these read KEERDQARGDL and RDELLSKAQTERDAANDRRT. Positions 493–528 are disordered; it reads KEERDQARGDLEDNTDRDELLSKAQTERDAANDRRT.

It belongs to the BICDR family. As to quaternary structure, may homodimerize but does not interact with BicD. May interact with eEF1gamma; The interaction is probably indirect.

Functionally, functions redundantly with BicD. Involved in formation and/or development of mechanosensory organs during metamorphosis. During macrochaetae development, together with BicD, involved in Rab 6 and Spn-F stability and distribution and actin cytoskeleton organization. This Drosophila melanogaster (Fruit fly) protein is Bicaudal D-related protein homolog.